The following is a 78-amino-acid chain: Large ribosomal subunit protein bL28 (78 aa).

The tract at residues 1 to 21 (MSRVCQVTGKRPVSGNNRSHA) is disordered.

It belongs to the bacterial ribosomal protein bL28 family.

This chain is Large ribosomal subunit protein bL28, found in Serratia proteamaculans (strain 568).